The following is a 360-amino-acid chain: DNA replication and repair protein RecF (360 aa).

30–37 (GQNGSGKT) provides a ligand contact to ATP.

This sequence belongs to the RecF family.

Its subcellular location is the cytoplasm. Functionally, the RecF protein is involved in DNA metabolism; it is required for DNA replication and normal SOS inducibility. RecF binds preferentially to single-stranded, linear DNA. It also seems to bind ATP. This is DNA replication and repair protein RecF from Shewanella baltica (strain OS223).